The primary structure comprises 118 residues: RNA guanine-N7 methyltransferase activating subunit (118 aa).

T2 bears the N-acetylthreonine mark. The interaction with RNMT stretch occupies residues 2-55 (TDTAEAVPNFEEMFASRFTENDKEYQEYLKRPPESPPIVEEWNSRAGGNQRNRG). Residues 30–118 (LKRPPESPPI…YNQRPPYGYY (89 aa)) form a disordered region. S36 is modified (phosphoserine). Positions 36–42 (SPPIVEE) match the RNMT-activating domain motif. Residues 45–56 (SRAGGNQRNRGN) are compositionally biased toward low complexity. The tract at residues 56–118 (NRLQDNRQFR…YNQRPPYGYY (63 aa)) is RNA-binding. The segment covering 57 to 70 (RLQDNRQFRGRDNR) has biased composition (basic and acidic residues). A compositionally biased stretch (polar residues) spans 76–93 (DNRSNQWHGRSWGNNYPQ). Position 85 is an omega-N-methylarginine (R85). Position 86 is a phosphoserine (S86). Positions 98–109 (PYYPQQYGHYGY) are enriched in low complexity.

Belongs to the RAM family. Interacts with RNMT; this interaction enhances mRNA binding and cap methyltransferase activity.

The protein resides in the nucleus. Regulatory subunit of the mRNA-capping methyltransferase RNMT:RAMAC complex that methylates the N7 position of the added guanosine to the 5'-cap structure of mRNAs. Promotes the recruitment of the methyl donor, S-adenosyl-L-methionine, to RNMT. Regulates RNMT expression by a post-transcriptional stabilizing mechanism. Binds RNA. The polypeptide is RNA guanine-N7 methyltransferase activating subunit (RAMAC) (Pongo abelii (Sumatran orangutan)).